The following is a 500-amino-acid chain: Citrate lyase alpha chain (500 aa).

As to quaternary structure, oligomer with a subunit composition of (alpha,beta,gamma)6.

It is found in the cytoplasm. The enzyme catalyses citrate = oxaloacetate + acetate. The catalysed reaction is citrate + acetyl-CoA = (3S)-citryl-CoA + acetate. Functionally, represents a citrate:acetyl-ACP transferase. This Haemophilus influenzae (strain ATCC 51907 / DSM 11121 / KW20 / Rd) protein is Citrate lyase alpha chain (citF).